The sequence spans 571 residues: DNA primase (571 aa).

The CHC2-type zinc-finger motif lies at 20-44; that stretch reads CPFHKEKTPSFQVDTEKGYYHCFGC. In terms of domain architecture, Toprim spans 229–309; sequence AELVVVEGYM…KFRVRATSVP (81 aa). Residues E235, D280, and D282 each coordinate Mg(2+).

Belongs to the DnaG primase family. As to quaternary structure, monomer. Interacts with DnaB. Requires Zn(2+) as cofactor. Mg(2+) is required as a cofactor.

The enzyme catalyses ssDNA + n NTP = ssDNA/pppN(pN)n-1 hybrid + (n-1) diphosphate.. RNA polymerase that catalyzes the synthesis of short RNA molecules used as primers for DNA polymerase during DNA replication. This is DNA primase from Deinococcus radiodurans (strain ATCC 13939 / DSM 20539 / JCM 16871 / CCUG 27074 / LMG 4051 / NBRC 15346 / NCIMB 9279 / VKM B-1422 / R1).